The chain runs to 217 residues: MAPRPRFDRRAPVRELPNINDRISYPQLRVVDSDGSQLGVISREEALEVSKERELDLVLVSEKADPPVCRIMDYGKFKFEQEKKAKEAKKKSHQTEVKEVKMRYKIDSHDYDVRIGQAQRFLKAGDKVKCTVIFRGREIQHTALAEVLLRRMAKDLEEKAEIQQSPKREGRNMIMFLTPRKTPLLKKDDKDSSVHQAIRTIPAPPRSTAAKVAAPQA.

The protein belongs to the IF-3 family. In terms of assembly, monomer.

The protein resides in the cytoplasm. In terms of biological role, IF-3 binds to the 30S ribosomal subunit and shifts the equilibrium between 70S ribosomes and their 50S and 30S subunits in favor of the free subunits, thus enhancing the availability of 30S subunits on which protein synthesis initiation begins. This chain is Translation initiation factor IF-3, found in Synechococcus sp. (strain CC9902).